Reading from the N-terminus, the 343-residue chain is Zinc finger protein Gfi-1b (343 aa).

Residues 1-20 (MPRSFLVKSKKTHTYNQHRY) form a mediates repression of transcription region. The tract at residues 1–20 (MPRSFLVKSKKTHTYNQHRY) is SNAG domain. The disordered stretch occupies residues 51–77 (STDPTEKQHTPENVITEEARSDPGDPR). Residues 67-77 (EEARSDPGDPR) are compositionally biased toward basic and acidic residues. 6 C2H2-type zinc fingers span residues 176-199 (YHCVKCSKVFSTSHGLEVHVRRSH), 205-227 (FVCNICGKSFGHAVSLEQHLNVH), 233-255 (FECKMCGKTFKRSSTLSTHLLIH), 261-283 (YPCQFCGKRFHQKSDMKKHTYIH), 289-311 (HKCQVCGKAFSQSSNLITHSRKH), and 317-340 (FSCDLCCKGFQRKVDLRRHRENQH).

It is found in the nucleus. Functionally, essential transcriptional regulator necessary for development and differentiation of erythroid and megakaryocytic lineages. Alters histone methylation by recruiting histone methyltransferase to target genes promoters. Plays a role in heterochromatin formation. The sequence is that of Zinc finger protein Gfi-1b (gfi1b) from Xenopus laevis (African clawed frog).